We begin with the raw amino-acid sequence, 206 residues long: dCTP deaminase, dUMP-forming (206 aa).

Residues 117–122, Asp-135, 143–145, Gln-163, Tyr-177, Lys-184, and Gln-188 contribute to the dCTP site; these read RSSFGR and TLE. Catalysis depends on Glu-145, which acts as the Proton donor/acceptor.

Belongs to the dCTP deaminase family. In terms of assembly, homotrimer.

The catalysed reaction is dCTP + 2 H2O = dUMP + NH4(+) + diphosphate. Its pathway is pyrimidine metabolism; dUMP biosynthesis; dUMP from dCTP: step 1/1. In terms of biological role, bifunctional enzyme that catalyzes both the deamination of dCTP to dUTP and the hydrolysis of dUTP to dUMP without releasing the toxic dUTP intermediate. This Methanococcus vannielii (strain ATCC 35089 / DSM 1224 / JCM 13029 / OCM 148 / SB) protein is dCTP deaminase, dUMP-forming.